Here is a 106-residue protein sequence, read N- to C-terminus: uncharacterized protein (106 aa).

Residues 78 to 98 (LAITGYVVSIPIVLPILIIFI) form a helical membrane-spanning segment.

Its subcellular location is the membrane. This is an uncharacterized protein from Haemophilus influenzae (strain ATCC 51907 / DSM 11121 / KW20 / Rd).